The sequence spans 997 residues: MASSSSSASRTWRYRVFTSFHGSDVRTSFLSHFRKQFNNNGITMFDDQRILRGETISPALTQAIRESRISIVLLSKNYASSGWCLDELLEILKCKDDMGQIVMTVFYGVDPSDVRKQTGEFGIAFNETCACRTEEERQKWSQALNYVGNIAGEHLLNWDNEAKMIEKIARDVSEKLNVTPCRDFDGMVGIEAHLRKIQSLLDLDNDEVKMVAISGPAGIGKSTIGRALHSLLSNRFHHTCFVDNLRGSHPIGLDEYGLKLRLQEQLLSKILNQDGSRICHLGAIKERLCDMKVFIILDDVNDVKQLEALANESNWFGPGSRIIVTTENKELLKQHGINNTYYVGFPSDEEAIKILCRYAFRQSSSRHGFKKLTRSVTELCGKLPLGLRVVGSSLHGKNEEEWEYVIRRLETIIDRDIEQVLRVGYESLHENEQSLFLHIAIFFNYEDGDLVKAMLAENDLDIEHELNILVNKSLIYISTDGRIRMHKLLQLVGRQANQREEPWKRRILIDAQEICHVLENDIGTGAVSGILFDTSGINEVSISNKALRRMCNLRFLSVYKTKHDGYNRMDIPEDMEFPPRLRLLHWDAYPSKCLPLKFRAENLVELDMKDSRLEYLWPGTQLLTKLKKLNLEGSYNLKELPDLSNATNLEMLDLSVCLALAELPSSIKNLHKLDVIYMDLCESLHMIPTNINLASLETMYMTGCPQLKTFPAFSTKIKRLYLVRTGVEEVPASITHCSRLLKIDLSGSRNLKSITHLPSSLQTLDLSSTDIEMIADSCIKDLQRLDHLRLCRCRKLKSLPELPASLRLLTAEDCESLERVTYPLNTPTGQLNFTNCLKLGEEAQRVIIQQSLVKHACFPGSVMPSEFNHRARGNSLKILVKSSASFAFKACVLISPRQLQCERNQRRVKIRCRVTDGRGRFVGSKVVSLEHPNHSTGIRTKHLCFFNGVLTEVSCDALCFVFKISAYNPLDNYEISECAVQILTNEPERRSCDGGSE.

Positions 12 to 176 constitute a TIR domain; it reads WRYRVFTSFH…KIARDVSEKL (165 aa). Residue Glu87 is part of the active site. In terms of domain architecture, NB-ARC spans 191–447; it reads EAHLRKIQSL…HIAIFFNYED (257 aa). 10 LRR repeats span residues 194–218, 534–557, 600–623, 624–647, 649–670, 671–693, 694–714, 715–737, 758–781, and 783–808; these read LRKI…GPAG, TSGI…RFLS, AENL…TQLL, TKLK…SNAT, LEML…IKNL, HKLD…NINL, ASLE…PAFS, TKIK…ITHC, PSSL…CIKD, and QRLD…SLRL.

It catalyses the reaction NAD(+) + H2O = ADP-D-ribose + nicotinamide + H(+). TIR-NB-LRR receptor-like protein that confers resistance to the pathogen Leptosphaeria maculans (blackleg disease). The protein is Disease resistance protein RML1A of Arabidopsis thaliana (Mouse-ear cress).